We begin with the raw amino-acid sequence, 254 residues long: Cytochrome c oxidase subunit 2 (254 aa).

At 12 to 38 (DAPEPWQICYQDSATKIMSGIDKLTGE) the chain is on the mitochondrial intermembrane side. Residues 39–59 (IFYYETLLLIIVGWVLISAII) form a helical membrane-spanning segment. At 60–73 (KYTKTELSYKYFNH) the chain is on the mitochondrial matrix side. The chain crosses the membrane as a helical span at residues 74 to 94 (GTLIEILWTCSPAFILIAISF). Topologically, residues 95 to 248 (PSFKLLYLMD…KYLEWLNIHL (154 aa)) are mitochondrial intermembrane. 6 residues coordinate Cu cation: His182, Cys217, Glu219, Cys221, His225, and Met228. A Mg(2+)-binding site is contributed by Glu219.

It belongs to the cytochrome c oxidase subunit 2 family. In terms of assembly, component of the cytochrome c oxidase (complex IV, CIV), a multisubunit enzyme composed of a catalytic core of 3 subunits and several supernumerary subunits. The complex exists as a monomer or a dimer and forms supercomplexes (SCs) in the inner mitochondrial membrane with ubiquinol-cytochrome c oxidoreductase (cytochrome b-c1 complex, complex III, CIII). It depends on Cu cation as a cofactor.

It localises to the mitochondrion inner membrane. It carries out the reaction 4 Fe(II)-[cytochrome c] + O2 + 8 H(+)(in) = 4 Fe(III)-[cytochrome c] + 2 H2O + 4 H(+)(out). Functionally, component of the cytochrome c oxidase, the last enzyme in the mitochondrial electron transport chain which drives oxidative phosphorylation. The respiratory chain contains 3 multisubunit complexes succinate dehydrogenase (complex II, CII), ubiquinol-cytochrome c oxidoreductase (cytochrome b-c1 complex, complex III, CIII) and cytochrome c oxidase (complex IV, CIV), that cooperate to transfer electrons derived from NADH and succinate to molecular oxygen, creating an electrochemical gradient over the inner membrane that drives transmembrane transport and the ATP synthase. Cytochrome c oxidase is the component of the respiratory chain that catalyzes the reduction of oxygen to water. Electrons originating from reduced cytochrome c in the intermembrane space (IMS) are transferred via the dinuclear copper A center (CU(A)) of subunit 2 and heme A of subunit 1 to the active site in subunit 1, a binuclear center (BNC) formed by heme A3 and copper B (CU(B)). The BNC reduces molecular oxygen to 2 water molecules using 4 electrons from cytochrome c in the IMS and 4 protons from the mitochondrial matrix. The chain is Cytochrome c oxidase subunit 2 from Zancudomyces culisetae (Gut fungus).